The sequence spans 230 residues: Spliceosome-associated protein CWC15 homolog (230 aa).

Disordered regions lie at residues 1-157 and 164-183; these read MTTA…EEKQ and AGNP…GGDF. Residues 25–34 are compositionally biased toward polar residues; it reads KLSNQYSSKD. Coiled coils occupy residues 47–82 and 119–164; these read GQET…SASS and DSDE…NILA. Residues 52-78 are compositionally biased toward basic and acidic residues; sequence ADLRKKDLRRELEDKERNAIREKRARD. Over residues 104–125 the composition is skewed to acidic residues; sequence DADEAVDELNSSDDDDSDEDDT. The span at 131-157 shows a compositional bias: basic and acidic residues; sequence ELEKIKKERAEEKAARDEEIKEKEEKQ.

This sequence belongs to the CWC15 family. In terms of assembly, component of spliceosomal complex.

Its subcellular location is the nucleus. In terms of biological role, component of a spliceosomal complex that is required for activating pre-mRNA splicing. The polypeptide is Spliceosome-associated protein CWC15 homolog (Caenorhabditis elegans).